We begin with the raw amino-acid sequence, 542 residues long: Homeobox and leucine zipper protein Homez (542 aa).

The homeobox 1 DNA-binding region spans 55-114 (WTQAIQTSELDGNEHLLQAFSYFPYPSLADIALLCLRHGLQMEKVKTWFMAQRLRCGISW). The segment at 165-193 (LSPLAPSEQPTHMKGLKVEPEEPSQVSQL) is disordered. Residues Lys-181 and Lys-201 each participate in a glycyl lysine isopeptide (Lys-Gly) (interchain with G-Cter in SUMO2) cross-link. The disordered stretch occupies residues 250–307 (VHQPDKPASVSLLDNSCKEESEPSGIPPSSSTSSPSFQALANGTTATPKPLQPLGCIS). A compositionally biased stretch (low complexity) spans 272–285 (PSGIPPSSSTSSPS). Over residues 286–296 (FQALANGTTAT) the composition is skewed to polar residues. Position 345 is a phosphoserine (Ser-345). 2 consecutive DNA-binding regions (homeobox) follow at residues 349 to 409 (QHQR…KHGQ) and 443 to 502 (TPPL…AEVV). The Nuclear localization signal motif lies at 352–357 (RKTKRK). Disordered stretches follow at residues 424-454 (FQDPAIPTPSTRSLKEWAKTPPLPAPPPPPD) and 501-542 (VVVC…IIWD). Thr-443 is modified (phosphothreonine). Residues 444–454 (PPLPAPPPPPD) show a composition bias toward pro residues. A compositionally biased stretch (acidic residues) spans 505–542 (LDEEDEEDEEDELPEDGEEEEEEEEDDDDGDDDVIIWD).

In terms of assembly, homodimer or heterodimer (Potential). Interacts with HOXC8. In terms of tissue distribution, ubiquitous. Strongly expressed in testis.

The protein localises to the nucleus. In terms of biological role, may function as a transcriptional regulator. In Mus musculus (Mouse), this protein is Homeobox and leucine zipper protein Homez (Homez).